A 410-amino-acid chain; its full sequence is Lissencephaly-1 homolog (410 aa).

One can recognise a LisH domain in the interval 7-39 (QRDELNRAIADYLRSNGYEEAYSVFKKEAELDM). The stretch at 56–82 (TSVIRLQKKVMELESKLNEAKEEFTSG) forms a coiled coil. WD repeat units follow at residues 106–147 (GHRS…RTLK), 148–189 (GHTD…RTMH), 190–229 (GHDH…CVKT), 232–271 (GHRE…CKAE), 274–333 (EHEH…CLMT), 336–377 (GHDN…KTLN), and 379–410 (HEHF…WECR).

The protein belongs to the WD repeat LIS1/nudF family. As to quaternary structure, can self-associate. Component of the cytosolic PAF-AH (I) heterotetrameric enzyme, which is composed of PAFAH1B1 (beta), PAFAH1B2 (alpha2) and PAFAH1B3 (alpha1) subunits. The catalytic activity of the enzyme resides in the alpha1 (PAFAH1B3) and alpha2 (PAFAH1B2) subunits, whereas the beta subunit (PAFAH1B1) has regulatory activity. Trimer formation is not essential for the catalytic activity. Interacts with dynein, dynactin, nde1 and ndel1.

It localises to the cytoplasm. Its subcellular location is the cytoskeleton. The protein resides in the microtubule organizing center. It is found in the centrosome. Functionally, regulatory subunit (beta subunit) of the cytosolic type I platelet-activating factor (PAF) acetylhydrolase (PAF-AH (I)), an enzyme that catalyzes the hydrolyze of the acetyl group at the sn-2 position of PAF and its analogs and participates in PAF inactivation. Regulates the PAF-AH (I) activity in a catalytic dimer composition-dependent manner. Positively regulates the activity of the minus-end directed microtubule motor protein dynein. May enhance dynein-mediated microtubule sliding by targeting dynein to the microtubule plus end. Required for several dynein- and microtubule-dependent processes such as the maintenance of Golgi integrity, the peripheral transport of microtubule fragments and the coupling of the nucleus and centrosome. May be required for proliferation of neuronal precursors and neuronal migration. The chain is Lissencephaly-1 homolog (pafah1b1) from Xenopus laevis (African clawed frog).